The following is a 304-amino-acid chain: GTP cyclohydrolase FolE2 (304 aa).

This sequence belongs to the GTP cyclohydrolase IV family.

The catalysed reaction is GTP + H2O = 7,8-dihydroneopterin 3'-triphosphate + formate + H(+). It participates in cofactor biosynthesis; 7,8-dihydroneopterin triphosphate biosynthesis; 7,8-dihydroneopterin triphosphate from GTP: step 1/1. In terms of biological role, converts GTP to 7,8-dihydroneopterin triphosphate. The protein is GTP cyclohydrolase FolE2 of Bdellovibrio bacteriovorus (strain ATCC 15356 / DSM 50701 / NCIMB 9529 / HD100).